The following is a 209-amino-acid chain: Pyridoxine/pyridoxamine 5'-phosphate oxidase (209 aa).

Substrate is bound by residues 7–10 (REDY) and Lys64. FMN is bound by residues 59–64 (RIVLLK), 74–75 (FT), Arg80, and Lys81. Positions 121, 125, and 129 each coordinate substrate. FMN contacts are provided by residues 138–139 (QS) and Trp182. Position 188–190 (188–190 (RLH)) interacts with substrate. Arg192 is an FMN binding site.

It belongs to the pyridoxamine 5'-phosphate oxidase family. In terms of assembly, homodimer. FMN is required as a cofactor.

The catalysed reaction is pyridoxamine 5'-phosphate + O2 + H2O = pyridoxal 5'-phosphate + H2O2 + NH4(+). The enzyme catalyses pyridoxine 5'-phosphate + O2 = pyridoxal 5'-phosphate + H2O2. It functions in the pathway cofactor metabolism; pyridoxal 5'-phosphate salvage; pyridoxal 5'-phosphate from pyridoxamine 5'-phosphate: step 1/1. The protein operates within cofactor metabolism; pyridoxal 5'-phosphate salvage; pyridoxal 5'-phosphate from pyridoxine 5'-phosphate: step 1/1. In terms of biological role, catalyzes the oxidation of either pyridoxine 5'-phosphate (PNP) or pyridoxamine 5'-phosphate (PMP) into pyridoxal 5'-phosphate (PLP). This is Pyridoxine/pyridoxamine 5'-phosphate oxidase from Actinobacillus pleuropneumoniae serotype 3 (strain JL03).